The sequence spans 639 residues: Serine/threonine-protein phosphatase 2B catalytic subunit A1 (639 aa).

3 residues coordinate Fe cation: aspartate 120, histidine 122, and aspartate 148. Residues aspartate 148 and asparagine 180 each coordinate Zn(2+). Catalysis depends on histidine 181, which acts as the Proton donor. Zn(2+) contacts are provided by histidine 229 and histidine 311. Residues 494–503 are compositionally biased toward basic and acidic residues; it reads KSDIENERLP. A disordered region spans residues 494–602; that stretch reads KSDIENERLP…PSTRRRSLEN (109 aa). Low complexity-rich tracts occupy residues 515–527 and 546–572; these read ASPSASPIMPATP and TPISSAIASGSPGSPGTPTSPSIGGPP.

It belongs to the PPP phosphatase family. PP-2B subfamily. In terms of assembly, composed of two components (A and B), the A component is the catalytic subunit and the B component confers calcium sensitivity. Requires Fe(3+) as cofactor. It depends on Zn(2+) as a cofactor.

It carries out the reaction O-phospho-L-seryl-[protein] + H2O = L-seryl-[protein] + phosphate. It catalyses the reaction O-phospho-L-threonyl-[protein] + H2O = L-threonyl-[protein] + phosphate. Its function is as follows. Calcium-dependent, calmodulin-stimulated protein phosphatase. This subunit may have a role in the calmodulin activation of calcineurin. The chain is Serine/threonine-protein phosphatase 2B catalytic subunit A1 (CNA1) from Cryptococcus neoformans var. grubii serotype A (strain H99 / ATCC 208821 / CBS 10515 / FGSC 9487) (Filobasidiella neoformans var. grubii).